A 95-amino-acid polypeptide reads, in one-letter code: Aspartyl/glutamyl-tRNA(Asn/Gln) amidotransferase subunit C (95 aa).

The interval 74–95 (GQALEPAPDADNEHFLVPQVVE) is disordered.

The protein belongs to the GatC family. In terms of assembly, heterotrimer of A, B and C subunits.

The catalysed reaction is L-glutamyl-tRNA(Gln) + L-glutamine + ATP + H2O = L-glutaminyl-tRNA(Gln) + L-glutamate + ADP + phosphate + H(+). It carries out the reaction L-aspartyl-tRNA(Asn) + L-glutamine + ATP + H2O = L-asparaginyl-tRNA(Asn) + L-glutamate + ADP + phosphate + 2 H(+). Its function is as follows. Allows the formation of correctly charged Asn-tRNA(Asn) or Gln-tRNA(Gln) through the transamidation of misacylated Asp-tRNA(Asn) or Glu-tRNA(Gln) in organisms which lack either or both of asparaginyl-tRNA or glutaminyl-tRNA synthetases. The reaction takes place in the presence of glutamine and ATP through an activated phospho-Asp-tRNA(Asn) or phospho-Glu-tRNA(Gln). The protein is Aspartyl/glutamyl-tRNA(Asn/Gln) amidotransferase subunit C of Salinibacter ruber (strain DSM 13855 / M31).